The chain runs to 326 residues: MAASRKGKAVKAVKQEDLRRLMQETRRDSGRQKRVESPFARYSGAGQLMCALCDAPVKNALLWQTHVLGKQHKDKLQELKSRTAPAHTPAPAHTPAHTPAAASSSSSTLKRAAEPPPAPGKRAKLQTGAGAGLGLLAGHYDDDDDDEGGAGERKTAPPTDSALPADFFDSGPAPAPPISHSGSVSKAEQQESQEPPENRPESLPEGFFDDPVRDAQVRQVDTPKDQLEREWEEFQKEMRQVNSASDAIVAEDDEEGRLERQMDEIEEQMQCLRRVEELRAKQETARSRRRSQRREEEPMQEEEPLEEEEELMHILTQDWRAKGALA.

Residues 1–11 (MAASRKGKAVK) are compositionally biased toward basic residues. The interval 1–37 (MAASRKGKAVKAVKQEDLRRLMQETRRDSGRQKRVES) is disordered. Positions 13–36 (VKQEDLRRLMQETRRDSGRQKRVE) are enriched in basic and acidic residues. The C2H2-type zinc finger occupies 50-72 (CALCDAPVKNALLWQTHVLGKQH). A compositionally biased stretch (low complexity) spans 83 to 108 (TAPAHTPAPAHTPAHTPAAASSSSST). Disordered stretches follow at residues 83–214 (TAPA…PVRD), 237–257 (EMRQ…EEGR), and 276–309 (EELR…EEEE). Positions 180–195 (HSGSVSKAEQQESQEP) are enriched in polar residues. A coiled-coil region spans residues 224-295 (KDQLEREWEE…RSRRRSQRRE (72 aa)). Over residues 276–286 (EELRAKQETAR) the composition is skewed to basic and acidic residues. Residues 298–309 (PMQEEEPLEEEE) show a composition bias toward acidic residues.

The protein resides in the nucleus. It is found in the chromosome. The protein localises to the nucleus speckle. Functionally, may act as an important regulator of the cell cycle that participates in the maintenance of genome integrity. The chain is Zinc finger protein 830 from Danio rerio (Zebrafish).